The primary structure comprises 841 residues: DNA ligase (841 aa).

NAD(+) is bound by residues 33–37 (DAQYD), 82–83 (SL), and Glu114. The N6-AMP-lysine intermediate role is filled by Lys116. Residues Arg137, Glu174, Lys300, and Lys324 each coordinate NAD(+). Positions 418, 421, 436, and 442 each coordinate Zn(2+). Residues 758-841 (EKTGPLDGQT…AFLGEHGQQR (84 aa)) form the BRCT domain.

This sequence belongs to the NAD-dependent DNA ligase family. LigA subfamily. It depends on Mg(2+) as a cofactor. Requires Mn(2+) as cofactor.

The catalysed reaction is NAD(+) + (deoxyribonucleotide)n-3'-hydroxyl + 5'-phospho-(deoxyribonucleotide)m = (deoxyribonucleotide)n+m + AMP + beta-nicotinamide D-nucleotide.. Its function is as follows. DNA ligase that catalyzes the formation of phosphodiester linkages between 5'-phosphoryl and 3'-hydroxyl groups in double-stranded DNA using NAD as a coenzyme and as the energy source for the reaction. It is essential for DNA replication and repair of damaged DNA. The polypeptide is DNA ligase (Xanthomonas oryzae pv. oryzae (strain MAFF 311018)).